Reading from the N-terminus, the 1356-residue chain is DNA-directed RNA polymerase subunit beta (1356 aa).

Belongs to the RNA polymerase beta chain family. As to quaternary structure, the RNAP catalytic core consists of 2 alpha, 1 beta, 1 beta' and 1 omega subunit. When a sigma factor is associated with the core the holoenzyme is formed, which can initiate transcription.

The enzyme catalyses RNA(n) + a ribonucleoside 5'-triphosphate = RNA(n+1) + diphosphate. Functionally, DNA-dependent RNA polymerase catalyzes the transcription of DNA into RNA using the four ribonucleoside triphosphates as substrates. The polypeptide is DNA-directed RNA polymerase subunit beta (Stutzerimonas stutzeri (strain A1501) (Pseudomonas stutzeri)).